Consider the following 267-residue polypeptide: Glutamate racemase (267 aa).

Substrate contacts are provided by residues 9-10 (DS) and 41-42 (YS). Cys-73 (proton donor/acceptor) is an active-site residue. 74–75 (NT) serves as a coordination point for substrate. Cys-184 (proton donor/acceptor) is an active-site residue. 185–186 (TH) is a substrate binding site.

Belongs to the aspartate/glutamate racemases family.

The enzyme catalyses L-glutamate = D-glutamate. Its pathway is cell wall biogenesis; peptidoglycan biosynthesis. Functionally, provides the (R)-glutamate required for cell wall biosynthesis. This Actinobacillus pleuropneumoniae serotype 7 (strain AP76) protein is Glutamate racemase.